We begin with the raw amino-acid sequence, 136 residues long: Small ribosomal subunit protein eS6 (136 aa).

The protein belongs to the eukaryotic ribosomal protein eS6 family.

This chain is Small ribosomal subunit protein eS6, found in Methanosarcina mazei (strain ATCC BAA-159 / DSM 3647 / Goe1 / Go1 / JCM 11833 / OCM 88) (Methanosarcina frisia).